The chain runs to 986 residues: MASNNVAQFAAELKMPAGVLLEQLQAAGVTKASEDDSLSETDKARLLDHLRKSHGSTDADKRKITLTKRHTSEIKQSDATGKARTIQVEVRKKRTFVRRDETSAENGDASNHVAEADVDDLELQRREEEARHEAELLEKQAQELKARQEQLEREEAERQAREAAAEAERRRAEEEAAKKRAAAEAAAREQAQAAKPAQAAQPAAAKAEPVAAKAAEPAVAKQSEQDDERAAAERAAQREAAKKAEDAARQAAEKARAEQEQIAKRRAAAEAEARAIREMMNTPRKAQVKAPEPAPKPAEPAKAAEAKGTLHKPARPAGEAPSRPAAKKPAAAAPAATTTPSAGDKKKPGGGKGGWQDDAAKRRGIKTRGDTSGGVDRGWRGGPKGRGKHQDQNTTFQAPTEPIVREVHVPETITVADLAHKMAVKASEVIKSMMKLGQMVTINQMLDQETAMIIVEELGHHAVAAKLDDPEAMLVEGEISDAESLPRPPVVTVMGHVDHGKTSLLDYIRRAKVAAGEAGGITQHIGAYHVETPRGVITFLDTPGHEAFTAMRARGAKATDIVILVVAADDGVMPQTKEAIAHAKAGGVPLVVAINKIDKPDANPDRVKQELVAEGVVPEEYGGDSPFVSVSAKTGAGIDDLLENVLLQAEVLELKAPVEAPAKGLVIEAKLDKGKGPVATILVQSGTLNRGDVVLAGSAYGRVRAMLDETGKPTKSAGPSIPVEIQGLSEVPQAGEEVIVMPDDRKAREVALFRQGKFRDVKLAKQQAAKLENMLEQMGEGEVAYMPLIVKADVQGSQEALVQSLLKLSTDEVRVQIVHGAVGGISESDVNLATASKAVIIGFNTRADAQARKLAEANGVDIRYYNIIYDAVDEVKAAMSGMLAPEKREIVTGTVEVRQVFKVPKIGAVAGCMVTDGFVKRSSSVRVLRNNVVIFTGELDSLKRFKDDVKEVRQGFECGMSIKNFNDIVEGDQFEVFEITEVARTL.

Residues 95–394 form a disordered region; that stretch reads TFVRRDETSA…GRGKHQDQNT (300 aa). A compositionally biased stretch (basic and acidic residues) spans 122 to 182; the sequence is ELQRREEEAR…EEEAAKKRAA (61 aa). Low complexity predominate over residues 183 to 222; it reads AEAAAREQAQAAKPAQAAQPAAAKAEPVAAKAAEPAVAKQ. Positions 228–277 are enriched in basic and acidic residues; it reads ERAAAERAAQREAAKKAEDAARQAAEKARAEQEQIAKRRAAAEAEARAIR. A compositionally biased stretch (low complexity) spans 320 to 342; it reads APSRPAAKKPAAAAPAATTTPSA. Positions 371-384 are enriched in gly residues; that stretch reads TSGGVDRGWRGGPK. In terms of domain architecture, tr-type G spans 486-655; sequence PRPPVVTVMG…LLQAEVLELK (170 aa). The tract at residues 495–502 is G1; it reads GHVDHGKT. 495 to 502 contacts GTP; that stretch reads GHVDHGKT. The interval 520–524 is G2; the sequence is GITQH. The G3 stretch occupies residues 541–544; it reads DTPG. Residues 541–545 and 595–598 contribute to the GTP site; these read DTPGH and NKID. Residues 595-598 form a G4 region; it reads NKID. Residues 631–633 are G5; it reads SAK.

This sequence belongs to the TRAFAC class translation factor GTPase superfamily. Classic translation factor GTPase family. IF-2 subfamily.

It localises to the cytoplasm. Its function is as follows. One of the essential components for the initiation of protein synthesis. Protects formylmethionyl-tRNA from spontaneous hydrolysis and promotes its binding to the 30S ribosomal subunits. Also involved in the hydrolysis of GTP during the formation of the 70S ribosomal complex. The sequence is that of Translation initiation factor IF-2 from Paraburkholderia phytofirmans (strain DSM 17436 / LMG 22146 / PsJN) (Burkholderia phytofirmans).